We begin with the raw amino-acid sequence, 180 residues long: Dual-action ribosomal maturation protein DarP (180 aa).

It belongs to the DarP family.

It localises to the cytoplasm. Functionally, member of a network of 50S ribosomal subunit biogenesis factors which assembles along the 30S-50S interface, preventing incorrect 23S rRNA structures from forming. Promotes peptidyl transferase center (PTC) maturation. This is Dual-action ribosomal maturation protein DarP from Chromobacterium violaceum (strain ATCC 12472 / DSM 30191 / JCM 1249 / CCUG 213 / NBRC 12614 / NCIMB 9131 / NCTC 9757 / MK).